The sequence spans 156 residues: Small ribosomal subunit protein uS7 (156 aa).

The protein belongs to the universal ribosomal protein uS7 family. As to quaternary structure, part of the 30S ribosomal subunit. Contacts proteins S9 and S11.

In terms of biological role, one of the primary rRNA binding proteins, it binds directly to 16S rRNA where it nucleates assembly of the head domain of the 30S subunit. Is located at the subunit interface close to the decoding center, probably blocks exit of the E-site tRNA. This chain is Small ribosomal subunit protein uS7, found in Mycobacteroides abscessus (strain ATCC 19977 / DSM 44196 / CCUG 20993 / CIP 104536 / JCM 13569 / NCTC 13031 / TMC 1543 / L948) (Mycobacterium abscessus).